A 220-amino-acid chain; its full sequence is Uracil-DNA glycosylase 1 (220 aa).

Aspartate 65 acts as the Proton acceptor in catalysis.

It belongs to the uracil-DNA glycosylase (UDG) superfamily. UNG family.

It localises to the cytoplasm. The enzyme catalyses Hydrolyzes single-stranded DNA or mismatched double-stranded DNA and polynucleotides, releasing free uracil.. Excises uracil residues from the DNA which can arise as a result of misincorporation of dUMP residues by DNA polymerase or due to deamination of cytosine. The protein is Uracil-DNA glycosylase 1 of Bacteroides fragilis (strain ATCC 25285 / DSM 2151 / CCUG 4856 / JCM 11019 / LMG 10263 / NCTC 9343 / Onslow / VPI 2553 / EN-2).